We begin with the raw amino-acid sequence, 1016 residues long: Enhancer of polycomb-like protein 1 (1016 aa).

Disordered regions lie at residues 1-50 (MAIH…NDLE), 96-119 (LLGS…DASV), 450-488 (KEED…TIGT), 499-518 (GQVH…VKLP), and 842-1016 (ARMR…PNRK). Residues 35–50 (YKQSDLPTLNASNDLE) show a composition bias toward polar residues. 2 stretches are compositionally biased toward basic and acidic residues: residues 103–116 (DGDK…KKTD) and 457–473 (ESSK…DSSR). Polar residues predominate over residues 475–488 (GSATSMPGSATIGT). Residues 842 to 883 (ARMRTLQQQQRNNKQQAAGQSSGSSSASLGSNTNSNSSISGQ) show a composition bias toward low complexity. Over residues 884 to 902 (ADQGQTNLTNSGITRQGGA) the composition is skewed to polar residues. Over residues 904-923 (VNGSQTSTTNNTRSSVSGGS) the composition is skewed to low complexity. Positions 928 to 956 (LPTQSSQRSNTNSPLLASQPQGYSQQQKF) are enriched in polar residues. Positions 960–971 (PPTSQSQSQSPT) are enriched in low complexity. Over residues 976 to 994 (QLQTSKMYNKHGSNITPSN) the composition is skewed to polar residues.

This sequence belongs to the enhancer of polycomb family. As to quaternary structure, component of the NuA4 histone acetyltransferase complex.

It localises to the nucleus. Component of the NuA4 histone acetyltransferase complex which is involved in transcriptional activation of selected genes principally by acetylation of nucleosomal histone H4 and H2A. The NuA4 complex is also involved in DNA repair. Involved in gene silencing by neighboring heterochromatin, blockage of the silencing spreading along the chromosome, and required for cell cycle progression through G2/M. The sequence is that of Enhancer of polycomb-like protein 1 (EPL1) from Debaryomyces hansenii (strain ATCC 36239 / CBS 767 / BCRC 21394 / JCM 1990 / NBRC 0083 / IGC 2968) (Yeast).